Reading from the N-terminus, the 75-residue chain is Large ribosomal subunit protein bL31c (75 aa).

It belongs to the bacterial ribosomal protein bL31 family. Type A subfamily. As to quaternary structure, part of the 50S ribosomal subunit.

The protein localises to the plastid. The protein resides in the chloroplast. Binds the 23S rRNA. This chain is Large ribosomal subunit protein bL31c, found in Cyanidium caldarium (Red alga).